Here is a 372-residue protein sequence, read N- to C-terminus: Isoliquiritigenin 2'-O-methyltransferase (372 aa).

S-adenosyl-L-methionine is bound by residues G217, D240, D260, M261, and K274. H278 (proton acceptor) is an active-site residue.

The protein belongs to the class I-like SAM-binding methyltransferase superfamily. Cation-independent O-methyltransferase family. COMT subfamily. In terms of assembly, monomer. Homodimer. Roots (at protein level). Expressed mainly in roots, and to a lesser extent in root nodules. In the roots, expression is not detected in the root tip or the cells immediately behind the tip, but is detected in tissues starting 1.5-2.0 mm distal to the root tip. Detected in the epidermal and cortical cells of 2 day old roots, with lower levels in vascular tissue.

The catalysed reaction is isoliquiritigenin + S-adenosyl-L-methionine = 2'-O-methylisoliquiritigenin + S-adenosyl-L-homocysteine + H(+). It carries out the reaction licodione + S-adenosyl-L-methionine = 2'-O-methyllicodione + S-adenosyl-L-homocysteine + H(+). Inhibited by 1 mM Co(2+), Cu(2+), Zn(2+) or Fe(2+). Non-competitively inhibited by S-adenosyl-L-homocysteine. Competitively inhibited by 2'-O-methylisoliquiritigenin. Methylates the 2'-hydroxyl of isoliquiritigenin and licodione. Does not methylate narigenin chalcone, caffeic acid or daidzein. Involved in the root nodulation initiation by promoting the biosynthesis of nod-inducing molecules. This is Isoliquiritigenin 2'-O-methyltransferase from Medicago sativa (Alfalfa).